A 571-amino-acid chain; its full sequence is Cytosolic Fe-S cluster assembly factor NAR1 (571 aa).

6 residues coordinate [4Fe-4S] cluster: Cys-20, Cys-62, Cys-65, Cys-68, Cys-204, and Cys-259. The interval 415–437 (AKPSRMPGGKPIGSARRPNGKAS) is disordered. Cys-449 and Cys-453 together coordinate [4Fe-4S] cluster.

The protein belongs to the NARF family.

Functionally, component of the cytosolic Fe/S protein assembly machinery. Required for maturation of extramitochondrial Fe/S proteins. May play a role in the transfer of pre-assembled Fe/S clusters to target apoproteins. The protein is Cytosolic Fe-S cluster assembly factor NAR1 (NAR1) of Sclerotinia sclerotiorum (strain ATCC 18683 / 1980 / Ss-1) (White mold).